Consider the following 306-residue polypeptide: Pantothenate kinase (306 aa).

ATP is bound at residue 90–97; the sequence is GSVAVGKS.

The protein belongs to the prokaryotic pantothenate kinase family.

The protein localises to the cytoplasm. It catalyses the reaction (R)-pantothenate + ATP = (R)-4'-phosphopantothenate + ADP + H(+). The protein operates within cofactor biosynthesis; coenzyme A biosynthesis; CoA from (R)-pantothenate: step 1/5. This Lactococcus lactis subsp. lactis (strain IL1403) (Streptococcus lactis) protein is Pantothenate kinase (coaA).